We begin with the raw amino-acid sequence, 389 residues long: Urotensin-2 receptor (389 aa).

Positions 1 to 10 are enriched in polar residues; it reads MALTPESPSS. Residues 1-39 are disordered; sequence MALTPESPSSFPGLAATGSSVPEPPGGPNATLNSSWASP. Over 1-54 the chain is Extracellular; it reads MALTPESPSSFPGLAATGSSVPEPPGGPNATLNSSWASPTEPSSLEDLVATGTI. Asn29 and Asn33 each carry an N-linked (GlcNAc...) asparagine glycan. A compositionally biased stretch (polar residues) spans 30–39; the sequence is ATLNSSWASP. A helical membrane pass occupies residues 55 to 77; the sequence is GTLLSAMGVVGVVGNAYTLVVTC. Residues 78–87 lie on the Cytoplasmic side of the membrane; sequence RSLRAVASMY. A helical transmembrane segment spans residues 88 to 113; the sequence is VYVVNLALADLLYLLSIPFIVATYVT. Residues 114–124 lie on the Extracellular side of the membrane; that stretch reads KEWHFGDVGCR. Cys123 and Cys199 form a disulfide bridge. A helical membrane pass occupies residues 125–146; it reads VLFGLDFLTMHASIFTLTVMSS. At 147–167 the chain is on the cytoplasmic side; it reads ERYAAVLRPLDTVQRPKGYRK. A helical transmembrane segment spans residues 168–186; the sequence is LLALGTWLLALLLTLPVML. Residues 187 to 209 are Extracellular-facing; it reads AMRLVRRGPKSLCLPAWGPRAHR. Residues 210–232 form a helical membrane-spanning segment; it reads AYLTLLFATSIAGPGLLIGLLYA. At 233 to 258 the chain is on the cytoplasmic side; sequence RLARAYRRSQRASFKRARRPGARALR. The chain crosses the membrane as a helical span at residues 259-284; the sequence is LVLGIVLLFWACFLPFWLWQLLAQYH. Over 285–297 the chain is Extracellular; that stretch reads QAPLAPRTARIVN. The helical transmembrane segment at 298-318 threads the bilayer; the sequence is YLTTCLTYGNSCANPFLYTLL. Over 319–389 the chain is Cytoplasmic; that stretch reads TRNYRDHLRG…PAPEGPRAPA (71 aa). The disordered stretch occupies residues 328–389; it reads GRVRGPGSGG…PAPEGPRAPA (62 aa). The span at 331 to 340 shows a compositional bias: gly residues; it reads RGPGSGGGRG. The span at 355 to 368 shows a compositional bias: polar residues; it reads SGRSLSSCSPQPTD. Over residues 377-389 the composition is skewed to pro residues; sequence PARPAPEGPRAPA.

Belongs to the G-protein coupled receptor 1 family. In terms of tissue distribution, most abundant expression in the heart and pancreas.

The protein localises to the cell membrane. High affinity receptor for urotensin-2 and urotensin-2B. The activity of this receptor is mediated by a G-protein that activate a phosphatidylinositol-calcium second messenger system. The protein is Urotensin-2 receptor (UTS2R) of Homo sapiens (Human).